The sequence spans 317 residues: Beta-ketoacyl-[acyl-carrier-protein] synthase III (317 aa).

Active-site residues include cysteine 112 and histidine 244. Residues glutamine 245–arginine 249 form an ACP-binding region. Asparagine 274 is a catalytic residue.

It belongs to the thiolase-like superfamily. FabH family. Homodimer.

The protein resides in the cytoplasm. The enzyme catalyses malonyl-[ACP] + acetyl-CoA + H(+) = 3-oxobutanoyl-[ACP] + CO2 + CoA. It participates in lipid metabolism; fatty acid biosynthesis. In terms of biological role, catalyzes the condensation reaction of fatty acid synthesis by the addition to an acyl acceptor of two carbons from malonyl-ACP. Catalyzes the first condensation reaction which initiates fatty acid synthesis and may therefore play a role in governing the total rate of fatty acid production. Possesses both acetoacetyl-ACP synthase and acetyl transacylase activities. Its substrate specificity determines the biosynthesis of branched-chain and/or straight-chain of fatty acids. In Salmonella paratyphi B (strain ATCC BAA-1250 / SPB7), this protein is Beta-ketoacyl-[acyl-carrier-protein] synthase III.